A 333-amino-acid polypeptide reads, in one-letter code: Ribose-phosphate pyrophosphokinase (333 aa).

Residue 58 to 60 participates in ATP binding; sequence DGE. The Mg(2+) site is built by H151 and D190. K214 is an active-site residue. D-ribose 5-phosphate-binding positions include R216, D240, and 244–248; that span reads DTAGT.

The protein belongs to the ribose-phosphate pyrophosphokinase family. Class I subfamily. Homohexamer. Mg(2+) is required as a cofactor.

Its subcellular location is the cytoplasm. It catalyses the reaction D-ribose 5-phosphate + ATP = 5-phospho-alpha-D-ribose 1-diphosphate + AMP + H(+). It functions in the pathway metabolic intermediate biosynthesis; 5-phospho-alpha-D-ribose 1-diphosphate biosynthesis; 5-phospho-alpha-D-ribose 1-diphosphate from D-ribose 5-phosphate (route I): step 1/1. Involved in the biosynthesis of the central metabolite phospho-alpha-D-ribosyl-1-pyrophosphate (PRPP) via the transfer of pyrophosphoryl group from ATP to 1-hydroxyl of ribose-5-phosphate (Rib-5-P). In Synechocystis sp. (strain ATCC 27184 / PCC 6803 / Kazusa), this protein is Ribose-phosphate pyrophosphokinase.